We begin with the raw amino-acid sequence, 568 residues long: DNA mismatch repair protein MutL (568 aa).

Belongs to the DNA mismatch repair MutL/HexB family.

In terms of biological role, this protein is involved in the repair of mismatches in DNA. It is required for dam-dependent methyl-directed DNA mismatch repair. May act as a 'molecular matchmaker', a protein that promotes the formation of a stable complex between two or more DNA-binding proteins in an ATP-dependent manner without itself being part of a final effector complex. This is DNA mismatch repair protein MutL from Thermosipho africanus (strain TCF52B).